Here is a 124-residue protein sequence, read N- to C-terminus: Large ribosomal subunit protein bL12 (124 aa).

The protein belongs to the bacterial ribosomal protein bL12 family. In terms of assembly, homodimer. Part of the ribosomal stalk of the 50S ribosomal subunit. Forms a multimeric L10(L12)X complex, where L10 forms an elongated spine to which 2 to 4 L12 dimers bind in a sequential fashion. Binds GTP-bound translation factors.

Functionally, forms part of the ribosomal stalk which helps the ribosome interact with GTP-bound translation factors. Is thus essential for accurate translation. This is Large ribosomal subunit protein bL12 from Desulfitobacterium hafniense (strain DSM 10664 / DCB-2).